Here is a 167-residue protein sequence, read N- to C-terminus: MTEMAKGSVTHQRLIALLSQEGADFRVVTHEAVGKCEAVSEIRGTALGQGAKALVCKVKGNGVNQHVLAILAADQQADLSQLASHIGGLRASLASPAEVDELTGCVFGAIPPFSFHPKLKLVADPLLFERFDEIAFNAGMLDKSVILKTADYLRIAQPELVNFRRTA.

It is found in the cytoplasm. It catalyses the reaction L-seryl-tRNA(Lys) + H2O = tRNA(Lys) + L-serine. It carries out the reaction L-threonyl-tRNA(Lys) + H2O = tRNA(Lys) + L-threonine. The catalysed reaction is L-homoseryl-tRNA(Lys) + H2O = tRNA(Lys) + L-homoserine + H(+). The enzyme catalyses L-seryl-tRNA(Ala) + H2O = tRNA(Ala) + L-serine. It catalyses the reaction L-homoseryl-tRNA(Ser) + H2O = tRNA(Ser) + L-homoserine + H(+). It carries out the reaction L-seryl-tRNA(Thr) + H2O = tRNA(Thr) + L-serine. The catalysed reaction is L-threonyl-tRNA(Ile) + H2O = tRNA(Ile) + L-threonine. The enzyme catalyses L-threonyl-tRNA(Val) + H2O = tRNA(Val) + L-threonine. It catalyses the reaction L-threonyl-tRNA(Ser) + H2O = tRNA(Ser) + L-threonine. Its function is as follows. An aminoacyl-tRNA editing enzyme that deacylates Ser-tRNA and/or Thr-tRNA mischarged by lysyl-tRNA synthetase (LysRS), threonyl-tRNA synthetase (ThrRS), seryl-tRNA synthetase (SerRS), alanyl-tRNA synthetase (AlaRS), valyl-tRNA synthetase (ValRS) and isoleucyl-tRNA synthetase (IleRS) in vitro. Also deacylates mischarged Hse-tRNA(Lys) and Hse-tRNA(Ser), and cognate Ser-tRNA(Ser) and Thr-tRNA(Thr) in vitro. The presence of cognate ThrRS abolishes the Thr-tRNA(Thr) deacylase activity, hence this activity is not applicable physiologically. Not able to remove the amino acid moiety from cognate Val-tRNA(Val), Ile-tRNA(Ile), Lys-tRNA(Lys), Ala-tRNA(Ala) or Pro-tRNA(Pro), or from incorrectly charged Ala-tRNA(Pro), Cys-tRNA(Pro) or Leu-tRNA(Pro) in vitro. May be required in vivo to prevent mistranslation and to maintain growth when the error prone stress-inducible lysyl-tRNA synthetase (LysU) is expressed under environmental pressure. The protein is Multifunctional Ser/Thr-tRNA deacylase ProXp-y of Escherichia coli O157:H7.